A 550-amino-acid polypeptide reads, in one-letter code: 2-succinyl-5-enolpyruvyl-6-hydroxy-3-cyclohexene-1-carboxylate synthase (550 aa).

The protein belongs to the TPP enzyme family. MenD subfamily. Homodimer. Mg(2+) is required as a cofactor. Requires Mn(2+) as cofactor. The cofactor is thiamine diphosphate.

It carries out the reaction isochorismate + 2-oxoglutarate + H(+) = 5-enolpyruvoyl-6-hydroxy-2-succinyl-cyclohex-3-ene-1-carboxylate + CO2. The protein operates within quinol/quinone metabolism; 1,4-dihydroxy-2-naphthoate biosynthesis; 1,4-dihydroxy-2-naphthoate from chorismate: step 2/7. It participates in quinol/quinone metabolism; menaquinone biosynthesis. Catalyzes the thiamine diphosphate-dependent decarboxylation of 2-oxoglutarate and the subsequent addition of the resulting succinic semialdehyde-thiamine pyrophosphate anion to isochorismate to yield 2-succinyl-5-enolpyruvyl-6-hydroxy-3-cyclohexene-1-carboxylate (SEPHCHC). The polypeptide is 2-succinyl-5-enolpyruvyl-6-hydroxy-3-cyclohexene-1-carboxylate synthase (Flavobacterium psychrophilum (strain ATCC 49511 / DSM 21280 / CIP 103535 / JIP02/86)).